The following is a 148-amino-acid chain: Large ribosomal subunit protein uL15 (148 aa).

The segment covering 1–12 (MSEPIKLHDLRP) has biased composition (basic and acidic residues). Residues 1–52 (MSEPIKLHDLRPAKGANKPKTRVGRGEASKGKTAGRGTKGTKARKQVSAAFE) form a disordered region.

Belongs to the universal ribosomal protein uL15 family. In terms of assembly, part of the 50S ribosomal subunit.

Its function is as follows. Binds to the 23S rRNA. The chain is Large ribosomal subunit protein uL15 from Corynebacterium diphtheriae (strain ATCC 700971 / NCTC 13129 / Biotype gravis).